We begin with the raw amino-acid sequence, 355 residues long: UDP-N-acetylglucosamine--N-acetylmuramyl-(pentapeptide) pyrophosphoryl-undecaprenol N-acetylglucosamine transferase (355 aa).

UDP-N-acetyl-alpha-D-glucosamine contacts are provided by residues T15–G17, N127, R163, S191, I244, A263–E268, and Q288.

The protein belongs to the glycosyltransferase 28 family. MurG subfamily.

The protein localises to the cell inner membrane. It carries out the reaction di-trans,octa-cis-undecaprenyl diphospho-N-acetyl-alpha-D-muramoyl-L-alanyl-D-glutamyl-meso-2,6-diaminopimeloyl-D-alanyl-D-alanine + UDP-N-acetyl-alpha-D-glucosamine = di-trans,octa-cis-undecaprenyl diphospho-[N-acetyl-alpha-D-glucosaminyl-(1-&gt;4)]-N-acetyl-alpha-D-muramoyl-L-alanyl-D-glutamyl-meso-2,6-diaminopimeloyl-D-alanyl-D-alanine + UDP + H(+). Its pathway is cell wall biogenesis; peptidoglycan biosynthesis. In terms of biological role, cell wall formation. Catalyzes the transfer of a GlcNAc subunit on undecaprenyl-pyrophosphoryl-MurNAc-pentapeptide (lipid intermediate I) to form undecaprenyl-pyrophosphoryl-MurNAc-(pentapeptide)GlcNAc (lipid intermediate II). The polypeptide is UDP-N-acetylglucosamine--N-acetylmuramyl-(pentapeptide) pyrophosphoryl-undecaprenol N-acetylglucosamine transferase (Escherichia coli O45:K1 (strain S88 / ExPEC)).